Reading from the N-terminus, the 464-residue chain is Mitogen-activated protein kinase 10 (464 aa).

Positions 64 to 359 constitute a Protein kinase domain; it reads YQNLKPIGSG…VDDALQHPYI (296 aa). ATP contacts are provided by residues 70–78 and Lys-93; that span reads IGSGAQGIV. Asp-189 (proton acceptor) is an active-site residue. The residue at position 221 (Thr-221) is a Phosphothreonine; by MAP2K7. The short motif at 221-223 is the TXY element; that stretch reads TPY. At Tyr-223 the chain carries Phosphotyrosine; by MAP2K4. A disordered region spans residues 405–464; sequence TKNGVVKSQPSPSGAAVNSSESLPPSSAVNDISSMSTDQTLASDTDSSLEASAGPLGCCR. Over residues 410 to 454 the composition is skewed to polar residues; it reads VKSQPSPSGAAVNSSESLPPSSAVNDISSMSTDQTLASDTDSSLE. S-palmitoyl cysteine attachment occurs at residues Cys-462 and Cys-463.

This sequence belongs to the protein kinase superfamily. CMGC Ser/Thr protein kinase family. MAP kinase subfamily. As to quaternary structure, interacts with MAPK8IP1/JIP-1, MAPK8IP3/JIP-3/JSAP1 and SPAG9/MAPK8IP4/JIP4. Interacts with HDAC9 and MAPKBP1. Interacts with ARRB2; the interaction enhances MAPK10 activation by MAP3K5. Interacts with SARM1. Interacts with JUND; interaction is inhibited in the presence of MEN1. It depends on Mg(2+) as a cofactor. Dually phosphorylated on Thr-221 and Tyr-223 by MAP2K4 and MAP2K7, which activates the enzyme. MAP2K7 shows a strong preference for Thr-221 while MAP2K4 phosphorylates Tyr-223 preferentially. Weakly autophosphorylated on threonine and tyrosine residues in vitro. In terms of processing, palmitoylation regulates subcellular location and axonal development. In terms of tissue distribution, brain (at protein level). Expressed specifically in neurons of the hippocampus, cortex, cerebellum, brainstem, and spinal cord. Seems to be also found in testis, and very weakly in the heart.

Its subcellular location is the cytoplasm. It localises to the membrane. The protein localises to the nucleus. It is found in the mitochondrion. It carries out the reaction L-seryl-[protein] + ATP = O-phospho-L-seryl-[protein] + ADP + H(+). The catalysed reaction is L-threonyl-[protein] + ATP = O-phospho-L-threonyl-[protein] + ADP + H(+). Its activity is regulated as follows. Activated by threonine and tyrosine phosphorylation by two dual specificity kinases, MAP2K4 and MAP2K7. MAP2K7 phosphorylates MAPK10 on Thr-221 causing a conformational change and a large increase in Vmax for the enzyme. MAP2K4 then phosphorylates Tyr-223 resulting in a further increase in Vmax. Inhibited by dual specificity phosphatases, such as DUSP1. Inhibited by HDAC9. In terms of biological role, serine/threonine-protein kinase involved in various processes such as neuronal proliferation, differentiation, migration and programmed cell death. Extracellular stimuli such as pro-inflammatory cytokines or physical stress stimulate the stress-activated protein kinase/c-Jun N-terminal kinase (SAP/JNK) signaling pathway. In this cascade, two dual specificity kinases MAP2K4/MKK4 and MAP2K7/MKK7 phosphorylate and activate MAPK10/JNK3. In turn, MAPK10/JNK3 phosphorylates a number of transcription factors, primarily components of AP-1 such as JUN and ATF2 and thus regulates AP-1 transcriptional activity. Plays regulatory roles in the signaling pathways during neuronal apoptosis. Phosphorylates the neuronal microtubule regulator STMN2. Acts in the regulation of the amyloid-beta precursor protein/APP signaling during neuronal differentiation by phosphorylating APP. Also participates in neurite growth in spiral ganglion neurons. Phosphorylates the CLOCK-BMAL1 heterodimer and plays a role in the photic regulation of the circadian clock. Phosphorylates JUND and this phosphorylation is inhibited in the presence of MEN1. The polypeptide is Mitogen-activated protein kinase 10 (Mapk10) (Mus musculus (Mouse)).